The primary structure comprises 469 residues: 3-isopropylmalate dehydratase large subunit (469 aa).

[4Fe-4S] cluster-binding residues include Cys347, Cys410, and Cys413.

The protein belongs to the aconitase/IPM isomerase family. LeuC type 1 subfamily. Heterodimer of LeuC and LeuD. [4Fe-4S] cluster serves as cofactor.

It catalyses the reaction (2R,3S)-3-isopropylmalate = (2S)-2-isopropylmalate. It functions in the pathway amino-acid biosynthesis; L-leucine biosynthesis; L-leucine from 3-methyl-2-oxobutanoate: step 2/4. In terms of biological role, catalyzes the isomerization between 2-isopropylmalate and 3-isopropylmalate, via the formation of 2-isopropylmaleate. This chain is 3-isopropylmalate dehydratase large subunit, found in Burkholderia lata (strain ATCC 17760 / DSM 23089 / LMG 22485 / NCIMB 9086 / R18194 / 383).